A 125-amino-acid chain; its full sequence is MAVYAKDLDNNKELNQKLINDQLKIIDTLLLAEKKNFLVYELPAHFDFSSGDPLGSQRDIYYAIIKSLEERGFTVKICMKGDRALLFITWKKIQSIEINKKEEYLRMHFIQDEEKAFYCKFLESR.

This sequence belongs to the asfivirus B125R family.

This is an uncharacterized protein from African swine fever virus (isolate Pig/Kenya/KEN-50/1950) (ASFV).